We begin with the raw amino-acid sequence, 424 residues long: Adenylosuccinate synthetase (424 aa).

GTP is bound by residues 11–17 and 39–41; these read GDEGKGK and GHT. D12 serves as the catalytic Proton acceptor. Positions 12 and 39 each coordinate Mg(2+). IMP-binding positions include 12–15, 37–40, T127, R141, Q223, T238, and R302; these read DEGK and NAGH. H40 functions as the Proton donor in the catalytic mechanism. 298 to 304 lines the substrate pocket; that stretch reads TTTGRGR. GTP-binding positions include R304, 330–332, and 412–414; these read KLD and SVG.

It belongs to the adenylosuccinate synthetase family. As to quaternary structure, homodimer. Requires Mg(2+) as cofactor.

The protein localises to the cytoplasm. The catalysed reaction is IMP + L-aspartate + GTP = N(6)-(1,2-dicarboxyethyl)-AMP + GDP + phosphate + 2 H(+). The protein operates within purine metabolism; AMP biosynthesis via de novo pathway; AMP from IMP: step 1/2. Plays an important role in the de novo pathway of purine nucleotide biosynthesis. Catalyzes the first committed step in the biosynthesis of AMP from IMP. In Methanosarcina barkeri (strain Fusaro / DSM 804), this protein is Adenylosuccinate synthetase.